The primary structure comprises 420 residues: Arginine biosynthesis bifunctional protein ArgJ (420 aa).

Substrate is bound by residues T167, K193, T204, E284, N415, and T420. Residue T204 is the Nucleophile of the active site.

It belongs to the ArgJ family. In terms of assembly, heterotetramer of two alpha and two beta chains.

The protein resides in the cytoplasm. The catalysed reaction is N(2)-acetyl-L-ornithine + L-glutamate = N-acetyl-L-glutamate + L-ornithine. It carries out the reaction L-glutamate + acetyl-CoA = N-acetyl-L-glutamate + CoA + H(+). It participates in amino-acid biosynthesis; L-arginine biosynthesis; L-ornithine and N-acetyl-L-glutamate from L-glutamate and N(2)-acetyl-L-ornithine (cyclic): step 1/1. The protein operates within amino-acid biosynthesis; L-arginine biosynthesis; N(2)-acetyl-L-ornithine from L-glutamate: step 1/4. Catalyzes two activities which are involved in the cyclic version of arginine biosynthesis: the synthesis of N-acetylglutamate from glutamate and acetyl-CoA as the acetyl donor, and of ornithine by transacetylation between N(2)-acetylornithine and glutamate. This Prochlorococcus marinus (strain NATL2A) protein is Arginine biosynthesis bifunctional protein ArgJ.